We begin with the raw amino-acid sequence, 83 residues long: Putative membrane protein insertion efficiency factor (83 aa).

It belongs to the UPF0161 family.

The protein resides in the cell membrane. Its function is as follows. Could be involved in insertion of integral membrane proteins into the membrane. The protein is Putative membrane protein insertion efficiency factor of Streptococcus thermophilus (strain ATCC BAA-250 / LMG 18311).